The primary structure comprises 295 residues: GTPase Era (295 aa).

Positions 3 to 170 (KSGFVTIVGR…VDLMKTELPE (168 aa)) constitute an Era-type G domain. The tract at residues 11–18 (GRPNVGKS) is G1. 11–18 (GRPNVGKS) is a GTP binding site. The tract at residues 37-41 (QTTRN) is G2. The G3 stretch occupies residues 58-61 (DTPG). GTP contacts are provided by residues 58–62 (DTPGI) and 120–123 (NKID). The G4 stretch occupies residues 120-123 (NKID). The interval 149–151 (IAA) is G5. The KH type-2 domain occupies 201–278 (LRDEVPHGIA…NVKIWVKVRK (78 aa)).

It belongs to the TRAFAC class TrmE-Era-EngA-EngB-Septin-like GTPase superfamily. Era GTPase family. As to quaternary structure, monomer.

Its subcellular location is the cytoplasm. The protein localises to the cell membrane. In terms of biological role, an essential GTPase that binds both GDP and GTP, with rapid nucleotide exchange. Plays a role in 16S rRNA processing and 30S ribosomal subunit biogenesis and possibly also in cell cycle regulation and energy metabolism. The protein is GTPase Era of Clostridium botulinum (strain Eklund 17B / Type B).